A 33-amino-acid chain; its full sequence is Cytochrome b6-f complex subunit 8 (33 aa).

Residues 2-22 (LFTLAWASLAAVFSFSIAMVV) traverse the membrane as a helical segment.

Belongs to the PetN family. The 4 large subunits of the cytochrome b6-f complex are cytochrome b6, subunit IV (17 kDa polypeptide, PetD), cytochrome f and the Rieske protein, while the 4 small subunits are PetG, PetL, PetM and PetN. The complex functions as a dimer.

The protein resides in the cellular thylakoid membrane. Functionally, component of the cytochrome b6-f complex, which mediates electron transfer between photosystem II (PSII) and photosystem I (PSI), cyclic electron flow around PSI, and state transitions. This is Cytochrome b6-f complex subunit 8 from Prochlorococcus marinus (strain MIT 9303).